A 395-amino-acid chain; its full sequence is Probable alcohol dehydrogenase EutG (395 aa).

NAD(+) contacts are provided by residues aspartate 57, glycine 116–aspartate 120, threonine 156–threonine 160, lysine 178, and valine 197–valine 201. Residues aspartate 212, histidine 216, histidine 281, and histidine 295 each contribute to the Fe cation site. Histidine 295 and aspartate 354 together coordinate NAD(+).

It belongs to the iron-containing alcohol dehydrogenase family. Fe cation is required as a cofactor.

Its subcellular location is the bacterial microcompartment. It catalyses the reaction ethanol + NAD(+) = acetaldehyde + NADH + H(+). It functions in the pathway amine and polyamine degradation; ethanolamine degradation. Probably acts on the acetaldehyde produced by the degradation of ethanolamine, producing ethanol. Its function is as follows. Expression of the eut operon allows this bacteria to use ethanolamine (EA) as a carbon, nitrogen and energy source. It relies on cobalamin (vitamin B12) both as a cofactor for the ethanolamine ammonia-lyase (EAL) activity and to induce the operon. EA enhances bacterial survival in macrophages in a concentration-dependent manner, suggesting it is an important nutrient during infection. This Salmonella typhimurium (strain LT2 / SGSC1412 / ATCC 700720) protein is Probable alcohol dehydrogenase EutG.